The chain runs to 141 residues: Calcitonin (141 aa).

A signal peptide spans 1 to 25 (MGFQKFSPFLALSILVLLQAGSLHA). The propeptide occupies 26–82 (APFRSALESSPADPATLSEDEARLLLAALVQDYVQMKASELEQEQEREGSSLDSPRS). A Phosphoserine modification is found at serine 43. 2 disordered regions span residues 64–85 (SELE…SKRC) and 111–141 (IGVG…QNAN). Cysteines 85 and 91 form a disulfide. Proline 116 bears the Proline amide mark. Positions 118–132 (KKRDMSSDLERDHRP) are enriched in basic and acidic residues.

It belongs to the calcitonin family.

It is found in the secreted. Its function is as follows. Calcitonin is a peptide hormone that causes a rapid but short-lived drop in the level of calcium and phosphate in blood by promoting the incorporation of those ions in the bones. Calcitonin function is mediated by the calcitonin receptor/CALCR and the CALCR-RAMP2 (AMYR2) receptor complex. In terms of biological role, katacalcin is a potent plasma calcium-lowering peptide. In Homo sapiens (Human), this protein is Calcitonin.